The chain runs to 305 residues: uncharacterized protein (305 aa).

10 helical membrane-spanning segments follow: residues 11–31 (LLLA…KAAL), 37–57 (LLFA…VALP), 70–90 (IYLV…TIGL), 97–117 (LFSA…WLWL), 126–146 (VIGL…GFGG), 148–168 (ISVI…LGTV), 180–200 (IWMV…SGFW), 217–237 (LLFI…TLVG), 244–264 (VASY…IFLH), and 265–285 (EPLT…ICLV). EamA domains lie at 18-141 (IMWG…VISA) and 161-287 (VSWA…LVNT).

It belongs to the EamA transporter family.

The protein resides in the cell membrane. This is an uncharacterized protein from Bacillus subtilis (strain 168).